Consider the following 383-residue polypeptide: Putative protein FAM157A (383 aa).

Disordered stretches follow at residues 1-21 (MGPL…PLPK) and 177-254 (ATAR…PLGR).

The protein belongs to the FAM157 family.

This chain is Putative protein FAM157A (FAM157A), found in Homo sapiens (Human).